Reading from the N-terminus, the 339-residue chain is Ketol-acid reductoisomerase (NADP(+)) (339 aa).

A KARI N-terminal Rossmann domain is found at 1 to 182 (MRVYYDRDAD…GGGRSGIIET (182 aa)). NADP(+)-binding positions include 24–27 (YGSQ), Lys-48, Ser-51, Thr-53, and 83–86 (DELQ). The active site involves His-108. Gly-134 serves as a coordination point for NADP(+). The KARI C-terminal knotted domain occupies 183 to 328 (NFREECETDL…AKLRAMMPWI (146 aa)). Positions 191, 195, 227, and 231 each coordinate Mg(2+). Ser-252 provides a ligand contact to substrate.

This sequence belongs to the ketol-acid reductoisomerase family. It depends on Mg(2+) as a cofactor.

It catalyses the reaction (2R)-2,3-dihydroxy-3-methylbutanoate + NADP(+) = (2S)-2-acetolactate + NADPH + H(+). It carries out the reaction (2R,3R)-2,3-dihydroxy-3-methylpentanoate + NADP(+) = (S)-2-ethyl-2-hydroxy-3-oxobutanoate + NADPH + H(+). It participates in amino-acid biosynthesis; L-isoleucine biosynthesis; L-isoleucine from 2-oxobutanoate: step 2/4. Its pathway is amino-acid biosynthesis; L-valine biosynthesis; L-valine from pyruvate: step 2/4. Functionally, involved in the biosynthesis of branched-chain amino acids (BCAA). Catalyzes an alkyl-migration followed by a ketol-acid reduction of (S)-2-acetolactate (S2AL) to yield (R)-2,3-dihydroxy-isovalerate. In the isomerase reaction, S2AL is rearranged via a Mg-dependent methyl migration to produce 3-hydroxy-3-methyl-2-ketobutyrate (HMKB). In the reductase reaction, this 2-ketoacid undergoes a metal-dependent reduction by NADPH to yield (R)-2,3-dihydroxy-isovalerate. The protein is Ketol-acid reductoisomerase (NADP(+)) of Mesorhizobium japonicum (strain LMG 29417 / CECT 9101 / MAFF 303099) (Mesorhizobium loti (strain MAFF 303099)).